Consider the following 151-residue polypeptide: Gene 55 protein (151 aa).

This is Gene 55 protein (55) from Mycobacterium phage D29 (Mycobacteriophage D29).